The primary structure comprises 368 residues: 3-dehydroquinate synthase (368 aa).

Residues 112 to 116 (GVVGD), 136 to 137 (TT), Lys-149, Lys-158, and 176 to 179 (FLDT) contribute to the NAD(+) site. Zn(2+) contacts are provided by Glu-191, His-257, and His-274.

Belongs to the sugar phosphate cyclases superfamily. Dehydroquinate synthase family. It depends on Co(2+) as a cofactor. Zn(2+) serves as cofactor. NAD(+) is required as a cofactor.

The protein localises to the cytoplasm. It carries out the reaction 7-phospho-2-dehydro-3-deoxy-D-arabino-heptonate = 3-dehydroquinate + phosphate. It functions in the pathway metabolic intermediate biosynthesis; chorismate biosynthesis; chorismate from D-erythrose 4-phosphate and phosphoenolpyruvate: step 2/7. Functionally, catalyzes the conversion of 3-deoxy-D-arabino-heptulosonate 7-phosphate (DAHP) to dehydroquinate (DHQ). The chain is 3-dehydroquinate synthase from Natranaerobius thermophilus (strain ATCC BAA-1301 / DSM 18059 / JW/NM-WN-LF).